A 509-amino-acid polypeptide reads, in one-letter code: MRLSPVFVALLSGLLAADLGLARSVAPRVADSPAAVTGTRKTSLLKNVAGLPPVPSAAQVAATSLNTDDIQGDILVGMHKQKQLFYFFAINDPATFKTHLASDIAPVVASVTQLSNVATQPLVALNIAFSNTGLLALGVTDNLGDSLFANGQAKDATSFKESTSSWVPQFAGTGIHGVIILASDTTDLIDQQVASIESTFGSSISKLYSLSASIRPGNEAGHEMFGFLDGIAQPAINGFNTPLPGQNIVDAGVIITGATNDPITRPSWAVGGSFLAFRQLEQLVPEFNKYLLDNAPAGSGSLQARADLLGARMVGRWKSGAPIDLTPTADDPALGADAQRNNNFTYSHAGFDLGSDQSHCPFSAHIRKTRPRADLGGSLTPPNLSAGANSIMRSGIPYGPEVTSAESASNTTTQERGLAFVAYQAQLSQGFHFLQQTWADNANFPPGKTPATVGLDPIIGQNNGQPRVVNGLLPSNSSASLSIPQFVVSHGGEYFFSPPISAIGGRLSA.

The N-terminal stretch at methionine 1–alanine 22 is a signal peptide. The propeptide occupies arginine 23–alanine 61. Aspartate 229 (proton acceptor) is an active-site residue. Asparagine 343 is a glycosylation site (N-linked (GlcNAc...) asparagine). Histidine 365 contributes to the heme binding site. Asparagine 383, asparagine 410, and asparagine 476 each carry an N-linked (GlcNAc...) asparagine glycan.

This sequence belongs to the DyP-type peroxidase family. Heme b serves as cofactor.

Its subcellular location is the secreted. It catalyses the reaction Reactive Blue 5 + 2 H2O2 = 2,2'-disulfonyl azobenzene + 3-[(4-amino-6-chloro-1,3,5-triazin-2-yl)amino]benzenesulfonate + phthalate + 2 H2O + 2 H(+). The enzyme catalyses 2 a phenolic donor + H2O2 = 2 a phenolic radical donor + 2 H2O. Inhibited by imidazole. Its function is as follows. Manganese-independent peroxidase that is able to convert a large number of compounds, but its physiological substrate is not known. In addition to classic peroxidase substrates (e.g. 2,6-dimethoxyphenol), oxidizes dyes such as Reactive Blue 5 and Reactive Black 5. The sequence is that of Dye-decolorizing peroxidase AauDyP1 from Auricularia auricula-judae (Judas ear fungus).